The sequence spans 217 residues: Small ribosomal subunit protein uS3c (217 aa).

Residues 46-117 (VQKHIKNSSN…RLRMTLIEIA (72 aa)) form the KH type-2 domain.

Belongs to the universal ribosomal protein uS3 family. In terms of assembly, part of the 30S ribosomal subunit.

Its subcellular location is the plastid. It localises to the chloroplast. This is Small ribosomal subunit protein uS3c (rps3) from Marchantia polymorpha (Common liverwort).